Reading from the N-terminus, the 124-residue chain is Large ribosomal subunit protein bL12 (124 aa).

This sequence belongs to the bacterial ribosomal protein bL12 family. In terms of assembly, homodimer. Part of the ribosomal stalk of the 50S ribosomal subunit. Forms a multimeric L10(L12)X complex, where L10 forms an elongated spine to which 2 to 4 L12 dimers bind in a sequential fashion. Binds GTP-bound translation factors.

Forms part of the ribosomal stalk which helps the ribosome interact with GTP-bound translation factors. Is thus essential for accurate translation. The sequence is that of Large ribosomal subunit protein bL12 from Leptothrix cholodnii (strain ATCC 51168 / LMG 8142 / SP-6) (Leptothrix discophora (strain SP-6)).